Reading from the N-terminus, the 307-residue chain is Ribonuclease Z (307 aa).

Zn(2+) contacts are provided by His-63, His-65, Asp-67, His-68, His-140, Asp-211, and His-269. Asp-67 serves as the catalytic Proton acceptor.

It belongs to the RNase Z family. In terms of assembly, homodimer. It depends on Zn(2+) as a cofactor.

The enzyme catalyses Endonucleolytic cleavage of RNA, removing extra 3' nucleotides from tRNA precursor, generating 3' termini of tRNAs. A 3'-hydroxy group is left at the tRNA terminus and a 5'-phosphoryl group is left at the trailer molecule.. Its function is as follows. Zinc phosphodiesterase, which displays some tRNA 3'-processing endonuclease activity. Probably involved in tRNA maturation, by removing a 3'-trailer from precursor tRNA. The chain is Ribonuclease Z from Geobacillus kaustophilus (strain HTA426).